An 822-amino-acid chain; its full sequence is Pentatricopeptide repeat-containing protein At2g41720 (822 aa).

The disordered stretch occupies residues 1–28 (MATVTNFKLVTPPESSRADKPGATKASD). PPR repeat units follow at residues 106–136 (ARKNFPVLIRELSRRGCIELCVNVFKWMKIQ), 142–176 (RNDIYNMMIRLHARHNWVDQARGLFFEMQKWSCKP), 177–211 (DAETYDALINAHGRAGQWRWAMNLMDDMLRAAIAP), 212–246 (SRSTYNNLINACGSSGNWREALEVCKKMTDNGVGP), 247–281 (DLVTHNIVLSAYKSGRQYSKALSYFELMKGAKVRP), 282–316 (DTTTFNIIIYCLSKLGQSSQALDLFNSMREKRAEC), 319–353 (DVVTFTSIMHLYSVKGEIENCRAVFEAMVAEGLKP), 354–388 (NIVSYNALMGAYAVHGMSGTALSVLGDIKQNGIIP), 389–423 (DVVSYTCLLNSYGRSRQPGKAKEVFLMMRKERRKP), 424–458 (NVVTYNALIDAYGSNGFLAEAVEIFRQMEQDGIKP), 459–493 (NVVSVCTLLAACSRSKKKVNVDTVLSAAQSRGINL), 494–528 (NTAAYNSAIGSYINAAELEKAIALYQSMRKKKVKA), 529–563 (DSVTFTILISGSCRMSKYPEAISYLKEMEDLSIPL), 564–598 (TKEVYSSVLCAYSKQGQVTEAESIFNQMKMAGCEP), 599–633 (DVIAYTSMLHAYNASEKWGKACELFLEMEANGIEP), 634–668 (DSIACSALMRAFNKGGQPSNVFVLMDLMREKEIPF), 669–699 (TGAVFFEIFSACNTLQEWKRAIDLIQMMDPY), 704–738 (SIGLTNQMLHLFGKSGKVEAMMKLFYKIIASGVGI), and 739–773 (NLKTYAILLEHLLAVGNWRKYIEVLEWMSGAGIQP).

The protein belongs to the PPR family. P subfamily.

In Arabidopsis thaliana (Mouse-ear cress), this protein is Pentatricopeptide repeat-containing protein At2g41720 (EMB2654).